The primary structure comprises 232 residues: A-type ATP synthase subunit D (232 aa).

Residues 200–232 (KKIKNKKEAEEEDEDEDESEMTDETVVQTPADD) are disordered. The span at 209-222 (EEEDEDEDESEMTD) shows a compositional bias: acidic residues.

This sequence belongs to the V-ATPase D subunit family. In terms of assembly, has multiple subunits with at least A(3), B(3), C, D, E, F, H, I and proteolipid K(x).

The protein localises to the cell membrane. Its function is as follows. Component of the A-type ATP synthase that produces ATP from ADP in the presence of a proton gradient across the membrane. This chain is A-type ATP synthase subunit D, found in Haloquadratum walsbyi (strain DSM 16790 / HBSQ001).